The primary structure comprises 457 residues: Argininosuccinate lyase (457 aa).

Belongs to the lyase 1 family. Argininosuccinate lyase subfamily.

Its subcellular location is the cytoplasm. It carries out the reaction 2-(N(omega)-L-arginino)succinate = fumarate + L-arginine. The protein operates within amino-acid biosynthesis; L-arginine biosynthesis; L-arginine from L-ornithine and carbamoyl phosphate: step 3/3. The chain is Argininosuccinate lyase from Haemophilus influenzae (strain 86-028NP).